A 395-amino-acid chain; its full sequence is Acetate kinase (395 aa).

Position 7 (Asn7) interacts with Mg(2+). Lys14 provides a ligand contact to ATP. Arg85 is a binding site for substrate. Asp142 acts as the Proton donor/acceptor in catalysis. ATP contacts are provided by residues 202 to 206 (HLGNG), 277 to 279 (DMR), and 325 to 329 (GIGEN). Glu378 is a Mg(2+) binding site.

The protein belongs to the acetokinase family. As to quaternary structure, homodimer. Mg(2+) is required as a cofactor. The cofactor is Mn(2+).

The protein localises to the cytoplasm. The enzyme catalyses acetate + ATP = acetyl phosphate + ADP. It participates in metabolic intermediate biosynthesis; acetyl-CoA biosynthesis; acetyl-CoA from acetate: step 1/2. Functionally, catalyzes the formation of acetyl phosphate from acetate and ATP. Can also catalyze the reverse reaction. In Deinococcus geothermalis (strain DSM 11300 / CIP 105573 / AG-3a), this protein is Acetate kinase.